Reading from the N-terminus, the 809-residue chain is Lon protease (809 aa).

The Lon N-terminal domain occupies 20–216 (LPLLALRDVV…ELMNYLMNQS (197 aa)). ATP is bound at residue 369-376 (GPPGVGKT). Residues 606–787 (EAQVGRVNGL…DEILPLALTS (182 aa)) enclose the Lon proteolytic domain. Residues Ser693 and Lys736 contribute to the active site.

The protein belongs to the peptidase S16 family. In terms of assembly, homohexamer. Organized in a ring with a central cavity.

Its subcellular location is the cytoplasm. It carries out the reaction Hydrolysis of proteins in presence of ATP.. Functionally, ATP-dependent serine protease that mediates the selective degradation of mutant and abnormal proteins as well as certain short-lived regulatory proteins. Required for cellular homeostasis and for survival from DNA damage and developmental changes induced by stress. Degrades polypeptides processively to yield small peptide fragments that are 5 to 10 amino acids long. Binds to DNA in a double-stranded, site-specific manner. The polypeptide is Lon protease (Acinetobacter baumannii (strain AB307-0294)).